The following is an 85-amino-acid chain: Toxin TdNa8 (85 aa).

The first 19 residues, M1–S19, serve as a signal peptide directing secretion. Residues K21 to R81 form the LCN-type CS-alpha/beta domain. Disulfide bonds link C31–C80, C35–C56, C42–C63, and C46–C65. At P82 the chain carries Proline amide.

Belongs to the long (4 C-C) scorpion toxin superfamily. Sodium channel inhibitor family. Alpha subfamily. Expressed by the venom gland.

Its subcellular location is the secreted. In terms of biological role, alpha toxins bind voltage-independently at site-3 of sodium channels (Nav) and inhibit the inactivation of the activated channels, thereby blocking neuronal transmission. The sequence is that of Toxin TdNa8 from Tityus discrepans (Venezuelan scorpion).